The chain runs to 178 residues: Large ribosomal subunit protein uL5 (178 aa).

It belongs to the universal ribosomal protein uL5 family. Part of the 50S ribosomal subunit; contacts the 5S rRNA and probably tRNA. Forms a bridge to the 30S subunit in the 70S ribosome.

Its function is as follows. This is one of the proteins that bind and probably mediate the attachment of the 5S RNA into the large ribosomal subunit, where it forms part of the central protuberance. In the 70S ribosome it contacts protein S13 of the 30S subunit (bridge B1b), connecting the 2 subunits; this bridge is implicated in subunit movement. May contact the P site tRNA; the 5S rRNA and some of its associated proteins might help stabilize positioning of ribosome-bound tRNAs. The protein is Large ribosomal subunit protein uL5 of Archaeoglobus fulgidus (strain ATCC 49558 / DSM 4304 / JCM 9628 / NBRC 100126 / VC-16).